A 214-amino-acid polypeptide reads, in one-letter code: Large ribosomal subunit protein bL25 (214 aa).

The segment at 179-214 is disordered; that stretch reads VPPTQGPSEAEIEEVEAGDADTPEPEVVGEKEEDEE. The span at 188–202 shows a compositional bias: acidic residues; sequence AEIEEVEAGDADTPE.

Belongs to the bacterial ribosomal protein bL25 family. CTC subfamily. Part of the 50S ribosomal subunit; part of the 5S rRNA/L5/L18/L25 subcomplex. Contacts the 5S rRNA. Binds to the 5S rRNA independently of L5 and L18.

In terms of biological role, this is one of the proteins that binds to the 5S RNA in the ribosome where it forms part of the central protuberance. This chain is Large ribosomal subunit protein bL25, found in Staphylococcus carnosus (strain TM300).